Reading from the N-terminus, the 213-residue chain is 3,4-dihydroxy-2-butanone 4-phosphate synthase (213 aa).

Residues 37-38 (RE), Asp42, 150-154 (RAGHT), and Glu174 contribute to the D-ribulose 5-phosphate site. Mg(2+) is bound at residue Glu38. His153 is a binding site for Mg(2+).

It belongs to the DHBP synthase family. In terms of assembly, homodimer. Mg(2+) serves as cofactor. Mn(2+) is required as a cofactor.

The enzyme catalyses D-ribulose 5-phosphate = (2S)-2-hydroxy-3-oxobutyl phosphate + formate + H(+). It functions in the pathway cofactor biosynthesis; riboflavin biosynthesis; 2-hydroxy-3-oxobutyl phosphate from D-ribulose 5-phosphate: step 1/1. Catalyzes the conversion of D-ribulose 5-phosphate to formate and 3,4-dihydroxy-2-butanone 4-phosphate. In Wigglesworthia glossinidia brevipalpis, this protein is 3,4-dihydroxy-2-butanone 4-phosphate synthase.